The following is a 61-amino-acid chain: Bacteriocin sakacin-P (61 aa).

Positions 1 to 18 (MEKFIELSLKEVTAITGG) are excised as a propeptide. Cysteine 27 and cysteine 32 are oxidised to a cystine.

The protein belongs to the bacteriocin class IIA/YGNGV family.

The protein resides in the secreted. Bactericidal activity; inhibits closely related Lactobacilli, Listeria monocytogenes and ivanovvi, Enterococcus faecalis, Carnobacterium sp and Brocothrix thermosphacta. The polypeptide is Bacteriocin sakacin-P (sakP) (Latilactobacillus sakei (Lactobacillus sakei)).